An 88-amino-acid polypeptide reads, in one-letter code: Putative regulatory protein DvMF_1139 (88 aa).

The protein belongs to the RemA family.

This chain is Putative regulatory protein DvMF_1139, found in Nitratidesulfovibrio vulgaris (strain DSM 19637 / Miyazaki F) (Desulfovibrio vulgaris).